The primary structure comprises 159 residues: MEKACKEPEEQPQSPPKADEERPSVEPSPEKSSPEEQSSEEVSSEEEFFPDELLPELLPEMLESEERPPQERLSRKDLFEARPPMEQPPCGVGKHKLEEGSFKERLARSRPQFRGDIHGRNLSNEEMIKVAEEMEEMKRVRNKLMVMHWKARRNRPYPI.

The segment at 1–120 (MEKACKEPEE…PQFRGDIHGR (120 aa)) is disordered. Residues 17 to 34 (KADEERPSVEPSPEKSSP) show a composition bias toward basic and acidic residues. The segment covering 37-54 (QSSEEVSSEEEFFPDELL) has biased composition (acidic residues). Composition is skewed to basic and acidic residues over residues 64–80 (SEER…DLFE) and 95–119 (HKLE…DIHG).

This sequence belongs to the TFS-II family. TFA subfamily.

It localises to the nucleus. May be involved in transcriptional regulation. Modulates various viral and cellular promoters in a promoter context-dependent manner. Does not bind DNA directly. This is Transcription elongation factor A protein-like 1 from Bos taurus (Bovine).